We begin with the raw amino-acid sequence, 366 residues long: Chorismate synthase (366 aa).

Residues Arg-47 and Arg-53 each coordinate NADP(+). FMN is bound by residues 124 to 126 (RSS), Gly-286, 301 to 305 (KPTAT), and Arg-327.

This sequence belongs to the chorismate synthase family. In terms of assembly, homotetramer. FMNH2 serves as cofactor.

The enzyme catalyses 5-O-(1-carboxyvinyl)-3-phosphoshikimate = chorismate + phosphate. It functions in the pathway metabolic intermediate biosynthesis; chorismate biosynthesis; chorismate from D-erythrose 4-phosphate and phosphoenolpyruvate: step 7/7. Functionally, catalyzes the anti-1,4-elimination of the C-3 phosphate and the C-6 proR hydrogen from 5-enolpyruvylshikimate-3-phosphate (EPSP) to yield chorismate, which is the branch point compound that serves as the starting substrate for the three terminal pathways of aromatic amino acid biosynthesis. This reaction introduces a second double bond into the aromatic ring system. The polypeptide is Chorismate synthase (Microcystis aeruginosa (strain NIES-843 / IAM M-2473)).